The chain runs to 285 residues: RNA 5'-monophosphate methyltransferase (285 aa).

Residues Arg-46, Asn-77, Asp-111, 136–137, and Met-165 contribute to the S-adenosyl-L-methionine site; that span reads DI. The Bin3-type SAM domain occupies 53-275; that stretch reads ELLRQLFPPE…KHTHETQAIP (223 aa).

This sequence belongs to the methyltransferase superfamily. In terms of assembly, interacts with DICER1; the interaction may be mediated by RNA.

It is found in the cytoplasm. It catalyses the reaction a 5'-end 5'-phospho-ribonucleoside-RNA + S-adenosyl-L-methionine = a 5'-end (5'-methylphospho)-ribonucleoside-RNA + S-adenosyl-L-homocysteine. The enzyme catalyses a 5'-end 5'-phospho-ribonucleoside-RNA + 2 S-adenosyl-L-methionine = a 5'-end (5'-bismethylphospho)-ribonucleoside-RNA + 2 S-adenosyl-L-homocysteine. O-methyltransferase that specifically monomethylates 5'-monophosphate of cytoplasmic histidyl tRNA (tRNA(His)), acting as a capping enzyme by protecting tRNA(His) from cleavage by DICER1. Also able, with less efficiently, to methylate the 5' monophosphate of a subset of pre-miRNAs, acting as a negative regulator of miRNA processing. The 5' monophosphate of pre-miRNAs is recognized by DICER1 and is required for pre-miRNAs processing: methylation at this position reduces the processing of pre-miRNAs by DICER1. Was also reported to mediate dimethylation of pre-miR-145; however dimethylation cannot be reproduced by another group which observes a monomethylation of pre-miR-145. This is RNA 5'-monophosphate methyltransferase from Mus musculus (Mouse).